We begin with the raw amino-acid sequence, 339 residues long: Dihydroorotate dehydrogenase (quinone) (339 aa).

FMN contacts are provided by residues 64–68 (AGADK) and Thr-88. Lys-68 provides a ligand contact to substrate. 113-117 (NRNGF) provides a ligand contact to substrate. FMN-binding residues include Asn-141 and Asn-174. A substrate-binding site is contributed by Asn-174. The active-site Nucleophile is the Ser-177. Asn-179 is a substrate binding site. 2 residues coordinate FMN: Lys-219 and Thr-247. 248 to 249 (NT) is a binding site for substrate. FMN is bound by residues Gly-270, Gly-299, and 320–321 (YS).

The protein belongs to the dihydroorotate dehydrogenase family. Type 2 subfamily. As to quaternary structure, monomer. The cofactor is FMN.

It is found in the cell membrane. It carries out the reaction (S)-dihydroorotate + a quinone = orotate + a quinol. Its pathway is pyrimidine metabolism; UMP biosynthesis via de novo pathway; orotate from (S)-dihydroorotate (quinone route): step 1/1. Catalyzes the conversion of dihydroorotate to orotate with quinone as electron acceptor. The polypeptide is Dihydroorotate dehydrogenase (quinone) (pyrD) (Pasteurella multocida (strain Pm70)).